The following is a 236-amino-acid chain: Large ribosomal subunit protein uL3 (236 aa).

Disordered regions lie at residues 132–153 and 200–236; these read SNRASHGNSRSHNVPGSIGMAQ and KGGDVTVSPSIRSARPTNNGNVNAAAKGGAKSGKKGG. Residues 133–145 show a composition bias toward polar residues; sequence NRASHGNSRSHNV. Residue Gln153 is modified to N5-methylglutamine. The span at 206–216 shows a compositional bias: polar residues; the sequence is VSPSIRSARPT. The span at 217–228 shows a compositional bias: low complexity; the sequence is NNGNVNAAAKGG.

The protein belongs to the universal ribosomal protein uL3 family. Part of the 50S ribosomal subunit. Forms a cluster with proteins L14 and L19. Methylated by PrmB.

Its function is as follows. One of the primary rRNA binding proteins, it binds directly near the 3'-end of the 23S rRNA, where it nucleates assembly of the 50S subunit. This Nitrosospira multiformis (strain ATCC 25196 / NCIMB 11849 / C 71) protein is Large ribosomal subunit protein uL3.